The sequence spans 501 residues: 2,3-bisphosphoglycerate-independent phosphoglycerate mutase (501 aa).

Residues aspartate 10 and serine 60 each coordinate Mn(2+). Serine 60 serves as the catalytic Phosphoserine intermediate. Residues histidine 121, 151 to 152 (RD), arginine 182, arginine 188, 256 to 259 (RPDR), and lysine 329 each bind substrate. Positions 394, 398, 435, 436, and 453 each coordinate Mn(2+).

It belongs to the BPG-independent phosphoglycerate mutase family. As to quaternary structure, monomer. Requires Mn(2+) as cofactor.

The enzyme catalyses (2R)-2-phosphoglycerate = (2R)-3-phosphoglycerate. It participates in carbohydrate degradation; glycolysis; pyruvate from D-glyceraldehyde 3-phosphate: step 3/5. Catalyzes the interconversion of 2-phosphoglycerate and 3-phosphoglycerate. This chain is 2,3-bisphosphoglycerate-independent phosphoglycerate mutase, found in Mycoplasmopsis synoviae (strain 53) (Mycoplasma synoviae).